A 156-amino-acid chain; its full sequence is UPF0756 membrane protein Exig_2210 (156 aa).

5 helical membrane passes run 5 to 25 (LFLI…LIIA), 52 to 72 (WGVT…DIGF), 83 to 103 (IGII…HGVG), 109 to 129 (PLVT…FRGV), and 131 to 151 (VGPL…DIIV).

This sequence belongs to the UPF0756 family.

Its subcellular location is the cell membrane. The chain is UPF0756 membrane protein Exig_2210 from Exiguobacterium sibiricum (strain DSM 17290 / CCUG 55495 / CIP 109462 / JCM 13490 / 255-15).